The sequence spans 288 residues: Nucleotide-binding protein Gura_2968 (288 aa).

Gly-8–Ser-15 provides a ligand contact to ATP. Position 59-62 (Asp-59–Gly-62) interacts with GTP.

The protein belongs to the RapZ-like family.

Its function is as follows. Displays ATPase and GTPase activities. In Geotalea uraniireducens (strain Rf4) (Geobacter uraniireducens), this protein is Nucleotide-binding protein Gura_2968.